The following is an 872-amino-acid chain: DNA mismatch repair protein MutS (872 aa).

Residue 602–609 (GPNMSGKS) participates in ATP binding.

The protein belongs to the DNA mismatch repair MutS family.

In terms of biological role, this protein is involved in the repair of mismatches in DNA. It is possible that it carries out the mismatch recognition step. This protein has a weak ATPase activity. This chain is DNA mismatch repair protein MutS, found in Staphylococcus aureus (strain MRSA252).